A 369-amino-acid polypeptide reads, in one-letter code: CLIP domain-containing serine protease HP8 (369 aa).

Residues 1-24 (MKTPFEKIRIISCILVIVSTNVVG) form the signal peptide. The propeptide occupies 25 to 81 (QKCNGGANCIPLEECTDLFQQLKQGNSPQLTRLLRGLHCGFEDLNSPKICCPPEFLA). The 50-residue stretch at 26 to 75 (KCNGGANCIPLEECTDLFQQLKQGNSPQLTRLLRGLHCGFEDLNSPKICC) folds into the Clip domain. Cystine bridges form between cysteine 27/cysteine 74, cysteine 33/cysteine 63, cysteine 39/cysteine 75, cysteine 105/cysteine 239, cysteine 142/cysteine 158, cysteine 186/cysteine 191, cysteine 286/cysteine 303, and cysteine 313/cysteine 344. Residues 113–368 (IFGGIQTEID…FMDWILSKLE (256 aa)) enclose the Peptidase S1 domain. The active-site Charge relay system is histidine 157. Ca(2+) is bound by residues glutamate 177, asparagine 179, threonine 182, and aspartate 185. Asparagine 179 carries N-linked (GlcNAc...) asparagine glycosylation. Residue aspartate 219 is the Charge relay system of the active site. The Charge relay system role is filled by serine 317.

It belongs to the peptidase S1 family. CLIP subfamily. As to quaternary structure, in the active form, heterodimer of a light chain and a heavy chain; disulfide-linked. Post-translationally, proteolytically cleaved for activation. Cleavage produces a light chain and a catalytic heavy chain which remains covalently associated probably through an interchain disulfide bond. In terms of tissue distribution, in larvae, expressed in the fat body and hemocytes.

Its subcellular location is the secreted. The protein localises to the cytoplasm. Its activity is regulated as follows. Inhibited by (p-amidinophenyl) methanesulfonyl fluoride, p-nitrophenyl-p'-guanidinobenzoate, D-phenylalanyl-L-prolyl-L-arginyl chloromethane, leupeptin, antipain and to a lesser extent by antithrombin III. In terms of biological role, endopeptidase with selective post-Arg cleavage site. Functions in the innate immune response to fungal and Gram-positive bacterial infections. Upon pathogen infection promotes nodulation; a cellular defense response in which hemocytes surround and isolate invading pathogens forming aggregates called nodules. Involved in activating nodule formation in response to infection with M.luteus, E.coli or S.cerevisiae. Able to bind the microbes M.luteus, E.coli or S.cerevisiae. According to another report, does not bind microorganisms. This Bombyx mori (Silk moth) protein is CLIP domain-containing serine protease HP8.